The sequence spans 86 residues: Small ribosomal subunit protein bS20 (86 aa).

The interval 1 to 25 (MTNIKSQQKRNRTNERARLRNKSVK) is disordered.

This sequence belongs to the bacterial ribosomal protein bS20 family.

Functionally, binds directly to 16S ribosomal RNA. This is Small ribosomal subunit protein bS20 from Mycobacterium leprae (strain Br4923).